The following is a 418-amino-acid chain: Acetylornithine aminotransferase (418 aa).

Residues 116-117 (GA) and phenylalanine 149 each bind pyridoxal 5'-phosphate. Arginine 152 lines the N(2)-acetyl-L-ornithine pocket. 240-243 (DEVQ) contributes to the pyridoxal 5'-phosphate binding site. Lysine 269 carries the N6-(pyridoxal phosphate)lysine modification. Position 296 (serine 296) interacts with N(2)-acetyl-L-ornithine. Threonine 297 lines the pyridoxal 5'-phosphate pocket.

The protein belongs to the class-III pyridoxal-phosphate-dependent aminotransferase family. ArgD subfamily. In terms of assembly, homodimer. Requires pyridoxal 5'-phosphate as cofactor.

The protein localises to the cytoplasm. The enzyme catalyses N(2)-acetyl-L-ornithine + 2-oxoglutarate = N-acetyl-L-glutamate 5-semialdehyde + L-glutamate. Its pathway is amino-acid biosynthesis; L-arginine biosynthesis; N(2)-acetyl-L-ornithine from L-glutamate: step 4/4. The protein is Acetylornithine aminotransferase of Prochlorococcus marinus (strain MIT 9313).